The chain runs to 386 residues: Synaptotagmin-5 (386 aa).

Over residues Met1–Pro16 the composition is skewed to pro residues. The interval Met1 to Arg21 is disordered. Residues Met1–Gln24 lie on the Vesicular side of the membrane. A helical membrane pass occupies residues Gly25–Ser45. The Cytoplasmic segment spans residues Ser46–Pro386. C2 domains are found at residues Gln108–Arg227 and Lys239–His372. Ca(2+)-binding residues include Leu138, Asp139, Asp145, Asp197, Phe198, Asp199, Ser202, Asp205, Asp270, Asp276, Asp330, and Asp332.

Belongs to the synaptotagmin family. In terms of assembly, homodimer. Interacts with both alpha- and beta-tubulin. Ca(2+) serves as cofactor.

Its subcellular location is the cytoplasmic vesicle. The protein resides in the secretory vesicle. It localises to the synaptic vesicle membrane. The protein localises to the recycling endosome membrane. In terms of biological role, may be involved in Ca(2+)-dependent exocytosis of secretory vesicles through Ca(2+) and phospholipid binding to the C2 domain or may serve as Ca(2+) sensors in the process of vesicular trafficking and exocytosis. Regulates the Ca(2+)-dependent secretion of norepinephrine in PC12 cells. Required for export from the endocytic recycling compartment to the cell surface. The protein is Synaptotagmin-5 (Syt5) of Mus musculus (Mouse).